We begin with the raw amino-acid sequence, 130 residues long: Small ribosomal subunit protein uS8 (130 aa).

It belongs to the universal ribosomal protein uS8 family. As to quaternary structure, part of the 30S ribosomal subunit. Contacts proteins S5 and S12.

In terms of biological role, one of the primary rRNA binding proteins, it binds directly to 16S rRNA central domain where it helps coordinate assembly of the platform of the 30S subunit. This chain is Small ribosomal subunit protein uS8, found in Buchnera aphidicola subsp. Cinara cedri (strain Cc).